Here is a 268-residue protein sequence, read N- to C-terminus: Tryptophan synthase alpha chain (268 aa).

Catalysis depends on proton acceptor residues glutamate 49 and aspartate 60.

Belongs to the TrpA family. Tetramer of two alpha and two beta chains.

It catalyses the reaction (1S,2R)-1-C-(indol-3-yl)glycerol 3-phosphate + L-serine = D-glyceraldehyde 3-phosphate + L-tryptophan + H2O. Its pathway is amino-acid biosynthesis; L-tryptophan biosynthesis; L-tryptophan from chorismate: step 5/5. In terms of biological role, the alpha subunit is responsible for the aldol cleavage of indoleglycerol phosphate to indole and glyceraldehyde 3-phosphate. This chain is Tryptophan synthase alpha chain, found in Pseudomonas aeruginosa (strain LESB58).